Consider the following 191-residue polypeptide: Peptidyl-tRNA hydrolase (191 aa).

Tyr-14 is a tRNA binding site. The active-site Proton acceptor is His-19. The tRNA site is built by Tyr-65, Asn-67, and Asn-113.

Belongs to the PTH family. As to quaternary structure, monomer.

The protein resides in the cytoplasm. It carries out the reaction an N-acyl-L-alpha-aminoacyl-tRNA + H2O = an N-acyl-L-amino acid + a tRNA + H(+). Functionally, hydrolyzes ribosome-free peptidyl-tRNAs (with 1 or more amino acids incorporated), which drop off the ribosome during protein synthesis, or as a result of ribosome stalling. Its function is as follows. Catalyzes the release of premature peptidyl moieties from peptidyl-tRNA molecules trapped in stalled 50S ribosomal subunits, and thus maintains levels of free tRNAs and 50S ribosomes. This chain is Peptidyl-tRNA hydrolase, found in Nitrosospira multiformis (strain ATCC 25196 / NCIMB 11849 / C 71).